The primary structure comprises 427 residues: MSTNAELFDRACRSIPGGVNSPVRAFRSVGGTPRFIQRAQGPYVWDAEGKQYIDYVGSWGPAILGHAHPEVVRAVQEAAVHGLSFGAPTEAEVELAEMLIARLPSLEQVRLVSSGTEATMTAIRLARGATGRHKIIKFEGCYHGHSDSLLVKAGSGLLTFGNPSSAGVPPEFVAHTLTLEFNNLAAVDAAFSQHGAEIACVIVEPVAGNMNLIKPAEGFLAGLRELCTRHGAVLIFDEVMTGFRVGPQGVQGLTGVRPDLTTLAKVIGGGMPVGAFGGRADLMAHIAPLGGVYQAGTLSGNPVAVAAGLATMRLIGEPGFYERLSAQTARLAQGLQERARAAGVPFSADAIGGMFGLYFGDRVPASFAEVSACDTEAFKRFFHAMLERGIHFAPSAFEAGFVSATHDDAVIDATLEAAEQVFATLRA.

Position 265 is an N6-(pyridoxal phosphate)lysine (K265).

The protein belongs to the class-III pyridoxal-phosphate-dependent aminotransferase family. HemL subfamily. As to quaternary structure, homodimer. It depends on pyridoxal 5'-phosphate as a cofactor.

The protein localises to the cytoplasm. The enzyme catalyses (S)-4-amino-5-oxopentanoate = 5-aminolevulinate. The protein operates within porphyrin-containing compound metabolism; protoporphyrin-IX biosynthesis; 5-aminolevulinate from L-glutamyl-tRNA(Glu): step 2/2. The sequence is that of Glutamate-1-semialdehyde 2,1-aminomutase from Bordetella bronchiseptica (strain ATCC BAA-588 / NCTC 13252 / RB50) (Alcaligenes bronchisepticus).